Here is a 246-residue protein sequence, read N- to C-terminus: MPALSGPQYLGEGLKLIMRPGLRLFVLIPLTLNLLVFALLIGFAMQQFSHWVDLLMPSLPDWLSFLQYIVWPLFVLLVLVIVFFTFTMVANIISAPFNGFLSEKVEVVVRGRDDFPPFSWAELLAMIPRTMGREMRKLAYFLPRALVLLVLSFVPGVNLIATPLWILFGIWMMAVQYIDYPADNHKLGWNEMLAWLRSKRWACMGFGGVTYLALLIPLVNLVMMPAAVAGATLFWVREEGERALVK.

Transmembrane regions (helical) follow at residues 24-44 (LFVLIPLTLNLLVFALLIGFA), 69-89 (IVWPLFVLLVLVIVFFTFTMV), 148-168 (LLVLSFVPGVNLIATPLWILF), and 214-234 (LLIPLVNLVMMPAAVAGATLF).

The protein belongs to the CysZ family.

The protein localises to the cell inner membrane. In terms of biological role, high affinity, high specificity proton-dependent sulfate transporter, which mediates sulfate uptake. Provides the sulfur source for the cysteine synthesis pathway. The polypeptide is Sulfate transporter CysZ (Pseudomonas aeruginosa (strain ATCC 15692 / DSM 22644 / CIP 104116 / JCM 14847 / LMG 12228 / 1C / PRS 101 / PAO1)).